Reading from the N-terminus, the 113-residue chain is Integration host factor subunit alpha (113 aa).

Positions 87–113 (NALNGEVSDETTEGADDDDDEEGEGDE) are disordered. The segment covering 93–113 (VSDETTEGADDDDDEEGEGDE) has biased composition (acidic residues).

This sequence belongs to the bacterial histone-like protein family. Heterodimer of an alpha and a beta chain.

Its function is as follows. This protein is one of the two subunits of integration host factor, a specific DNA-binding protein that functions in genetic recombination as well as in transcriptional and translational control. This chain is Integration host factor subunit alpha, found in Anaeromyxobacter dehalogenans (strain 2CP-1 / ATCC BAA-258).